Consider the following 264-residue polypeptide: Ubiquinone biosynthesis protein COQ4 homolog, mitochondrial (264 aa).

The N-terminal 26 residues, 1–26 (MMQRCWQISLPLARRRLIPSLTSKRT), are a transit peptide targeting the mitochondrion. Zn(2+) is bound by residues histidine 169, aspartate 170, histidine 173, and glutamate 185.

The protein belongs to the COQ4 family. In terms of assembly, component of a multi-subunit COQ enzyme complex. It depends on Zn(2+) as a cofactor.

The protein resides in the mitochondrion inner membrane. It carries out the reaction a 4-hydroxy-3-methoxy-5-(all-trans-polyprenyl)benzoate + H(+) = a 2-methoxy-6-(all-trans-polyprenyl)phenol + CO2. It functions in the pathway cofactor biosynthesis; ubiquinone biosynthesis. Functionally, lyase that catalyzes the C1-decarboxylation of 4-hydroxy-3-methoxy-5-(all-trans-polyprenyl)benzoic acid into 2-methoxy-6-(all-trans-polyprenyl)phenol during ubiquinone biosynthesis. This chain is Ubiquinone biosynthesis protein COQ4 homolog, mitochondrial, found in Drosophila grimshawi (Hawaiian fruit fly).